The following is a 187-amino-acid chain: Superoxide dismutase [Cu-Zn] (187 aa).

A signal peptide spans 1–23; it reads MMKMKTLLALAISGICAAGVANA. Cu cation-binding residues include H80, H82, and H105. A disulfide bridge connects residues C87 and C183. The Zn(2+) site is built by H105, H114, H123, and D126. Residue H161 participates in Cu cation binding.

It belongs to the Cu-Zn superoxide dismutase family. Homodimer. Cu cation serves as cofactor. It depends on Zn(2+) as a cofactor.

The protein resides in the periplasm. It carries out the reaction 2 superoxide + 2 H(+) = H2O2 + O2. Functionally, destroys radicals which are normally produced within the cells and which are toxic to biological systems. Its function is as follows. May confer survival advantage by accelerating dismutation of superoxide of environmental origin to hydrogen peroxide, disruptive to the normal mucociliary clearance process in the host. This chain is Superoxide dismutase [Cu-Zn] (sodC), found in Haemophilus parainfluenzae.